The primary structure comprises 190 residues: Elongation factor P-like protein (190 aa).

The protein belongs to the elongation factor P family.

The protein is Elongation factor P-like protein of Yersinia enterocolitica serotype O:8 / biotype 1B (strain NCTC 13174 / 8081).